Consider the following 410-residue polypeptide: Multifunctional CCA protein (410 aa).

Positions 8 and 11 each coordinate ATP. CTP-binding residues include Gly8 and Arg11. Positions 21 and 23 each coordinate Mg(2+). Arg91, Arg137, and Arg140 together coordinate ATP. Positions 91, 137, and 140 each coordinate CTP. The HD domain occupies 228–329; that stretch reads TGVHVLSVLQ…LELLQSFDVY (102 aa).

Belongs to the tRNA nucleotidyltransferase/poly(A) polymerase family. Bacterial CCA-adding enzyme type 1 subfamily. As to quaternary structure, monomer. Can also form homodimers and oligomers. It depends on Mg(2+) as a cofactor. Ni(2+) serves as cofactor.

It catalyses the reaction a tRNA precursor + 2 CTP + ATP = a tRNA with a 3' CCA end + 3 diphosphate. The enzyme catalyses a tRNA with a 3' CCA end + 2 CTP + ATP = a tRNA with a 3' CCACCA end + 3 diphosphate. In terms of biological role, catalyzes the addition and repair of the essential 3'-terminal CCA sequence in tRNAs without using a nucleic acid template. Adds these three nucleotides in the order of C, C, and A to the tRNA nucleotide-73, using CTP and ATP as substrates and producing inorganic pyrophosphate. tRNA 3'-terminal CCA addition is required both for tRNA processing and repair. Also involved in tRNA surveillance by mediating tandem CCA addition to generate a CCACCA at the 3' terminus of unstable tRNAs. While stable tRNAs receive only 3'-terminal CCA, unstable tRNAs are marked with CCACCA and rapidly degraded. The chain is Multifunctional CCA protein from Pseudomonas aeruginosa (strain ATCC 15692 / DSM 22644 / CIP 104116 / JCM 14847 / LMG 12228 / 1C / PRS 101 / PAO1).